A 72-amino-acid chain; its full sequence is Protein RALF-like 11 (72 aa).

Positions 1–17 are cleaved as a signal peptide; the sequence is MKAWLICLLVICAAVIA. 2 disulfide bridges follow: Cys-34–Cys-43 and Cys-63–Cys-69.

Belongs to the plant rapid alkalinization factor (RALF) family.

The protein localises to the secreted. Cell signaling peptide that may regulate plant stress, growth, and development. Mediates a rapid alkalinization of extracellular space by mediating a transient increase in the cytoplasmic Ca(2+) concentration leading to a calcium-dependent signaling events through a cell surface receptor and a concomitant activation of some intracellular mitogen-activated protein kinases. This chain is Protein RALF-like 11 (RALFL11), found in Arabidopsis thaliana (Mouse-ear cress).